Here is a 211-residue protein sequence, read N- to C-terminus: Ribosomal RNA small subunit methyltransferase G (211 aa).

S-adenosyl-L-methionine contacts are provided by residues Gly-79, Leu-84, 130 to 131 (VE), and Arg-145.

Belongs to the methyltransferase superfamily. RNA methyltransferase RsmG family.

The protein resides in the cytoplasm. The catalysed reaction is guanosine(527) in 16S rRNA + S-adenosyl-L-methionine = N(7)-methylguanosine(527) in 16S rRNA + S-adenosyl-L-homocysteine. Functionally, specifically methylates the N7 position of guanine in position 527 of 16S rRNA. The protein is Ribosomal RNA small subunit methyltransferase G of Alteromonas mediterranea (strain DSM 17117 / CIP 110805 / LMG 28347 / Deep ecotype).